The following is a 200-amino-acid chain: Glycerol-3-phosphate acyltransferase (200 aa).

5 helical membrane-spanning segments follow: residues 2 to 22 (IHLLLVVAAYLLGSLSFAVIV), 51 to 71 (TAAILTLLGDALKGWVAVVAA), 84 to 104 (IVLLCALAAFIGHLFPVFFGF), 113 to 133 (ALGILVALDPWLGLACLATWV), and 143 to 163 (SLSALVTAVLAPVYAGLLLGW).

This sequence belongs to the PlsY family. As to quaternary structure, probably interacts with PlsX.

The protein localises to the cell inner membrane. It carries out the reaction an acyl phosphate + sn-glycerol 3-phosphate = a 1-acyl-sn-glycero-3-phosphate + phosphate. It participates in lipid metabolism; phospholipid metabolism. In terms of biological role, catalyzes the transfer of an acyl group from acyl-phosphate (acyl-PO(4)) to glycerol-3-phosphate (G3P) to form lysophosphatidic acid (LPA). This enzyme utilizes acyl-phosphate as fatty acyl donor, but not acyl-CoA or acyl-ACP. The polypeptide is Glycerol-3-phosphate acyltransferase (Thiobacillus denitrificans (strain ATCC 25259 / T1)).